Reading from the N-terminus, the 209-residue chain is Imidazoleglycerol-phosphate dehydratase (209 aa).

The protein belongs to the imidazoleglycerol-phosphate dehydratase family.

It is found in the cytoplasm. The enzyme catalyses D-erythro-1-(imidazol-4-yl)glycerol 3-phosphate = 3-(imidazol-4-yl)-2-oxopropyl phosphate + H2O. The protein operates within amino-acid biosynthesis; L-histidine biosynthesis; L-histidine from 5-phospho-alpha-D-ribose 1-diphosphate: step 6/9. The chain is Imidazoleglycerol-phosphate dehydratase from Paracidovorax citrulli (strain AAC00-1) (Acidovorax citrulli).